Reading from the N-terminus, the 71-residue chain is uncharacterized protein (71 aa).

The Cytoplasmic portion of the chain corresponds to 1-16 (MLLLYTVMILTCIIYK). The helical transmembrane segment at 17-38 (LVPDNKYWPIHMFFFIMIYIVY) threads the bilayer. Residues 39 to 69 (MYEKLDIHEKSQFWNYTMARLSGHPVPTIIC) are Extracellular-facing. A glycan (N-linked (GlcNAc...) asparagine; by host) is linked at asparagine 53.

This sequence belongs to the asfivirus X69R family.

It is found in the host membrane. This is an uncharacterized protein from African swine fever virus (isolate Pig/Kenya/KEN-50/1950) (ASFV).